Here is a 308-residue protein sequence, read N- to C-terminus: Protein translocase subunit SecF (308 aa).

6 helical membrane passes run 28–48 (SIIL…NFGI), 140–160 (IEAG…YIWV), 164–184 (WYFG…ALGF), 194–214 (LSTI…SVVI), 246–266 (ILTV…GGEA), and 272–292 (ILVF…SAPI).

It belongs to the SecD/SecF family. SecF subfamily. Forms a complex with SecD. Part of the essential Sec protein translocation apparatus which comprises SecA, SecYEG and auxiliary proteins SecDF-YajC and YidC.

It localises to the cell inner membrane. In terms of biological role, part of the Sec protein translocase complex. Interacts with the SecYEG preprotein conducting channel. SecDF uses the proton motive force (PMF) to complete protein translocation after the ATP-dependent function of SecA. The polypeptide is Protein translocase subunit SecF (Rickettsia rickettsii (strain Sheila Smith)).